A 456-amino-acid chain; its full sequence is Chromosomal replication initiator protein DnaA 1 (456 aa).

Residues 1–68 are domain I, interacts with DnaA modulators; the sequence is MRAWEEFLLL…KASLINNNGK (68 aa). The tract at residues 68–101 is domain II; the sequence is KPIRVRVTSLDKSTPFKETQIQQEKTAYFTMKYG. The segment at 102–320 is domain III, AAA+ region; the sequence is DIDPNMSFAN…HALTTLAKRV (219 aa). Ser150, Gly152, Lys153, and Thr154 together coordinate ATP. The segment at 321-456 is domain IV, binds dsDNA; sequence AYKKLSHQML…AYQSLDFIED (136 aa).

It belongs to the DnaA family. Oligomerizes as a right-handed, spiral filament on DNA at oriC.

The protein localises to the cytoplasm. Functionally, plays an essential role in the initiation and regulation of chromosomal replication. ATP-DnaA binds to the origin of replication (oriC) to initiate formation of the DNA replication initiation complex once per cell cycle. Binds the DnaA box (a 9 base pair repeat at the origin) and separates the double-stranded (ds)DNA. Forms a right-handed helical filament on oriC DNA; dsDNA binds to the exterior of the filament while single-stranded (ss)DNA is stabiized in the filament's interior. The ATP-DnaA-oriC complex binds and stabilizes one strand of the AT-rich DNA unwinding element (DUE), permitting loading of DNA polymerase. After initiation quickly degrades to an ADP-DnaA complex that is not apt for DNA replication. Binds acidic phospholipids. The polypeptide is Chromosomal replication initiator protein DnaA 1 (Chlamydia trachomatis serovar D (strain ATCC VR-885 / DSM 19411 / UW-3/Cx)).